The sequence spans 160 residues: Protein BOLA1, chloroplastic (160 aa).

Residues 1 to 50 (MFSSSIRLIVSGFHRTQPLKSPVNSPSVFISVPKFFNSESKSTGTGSRSV) constitute a chloroplast transit peptide. The span at 39–61 (ESKSTGTGSRSVAMSSVEKTGSD) shows a compositional bias: polar residues. The interval 39 to 66 (ESKSTGTGSRSVAMSSVEKTGSDSGAIE) is disordered.

The protein belongs to the bolA/yrbA family. Interacts in vitro with GRXS14, GRXS15, GRXS16 and GRXS17, but not with GRXC5. Interacts in vivo only with GRXS14 and GRXS16.

The protein localises to the plastid. The protein resides in the chloroplast. Its function is as follows. May act either alone or in interaction with glutaredoxin as a redox-regulated transcriptional regulator, or as a factor regulating Fe-S cluster biogenesis. The glutaredoxin-BOLA1 heterodimers bind a labile, oxygen sensitive iron-sulfur cluster. The sequence is that of Protein BOLA1, chloroplastic from Arabidopsis thaliana (Mouse-ear cress).